Reading from the N-terminus, the 105-residue chain is Venom metalloprotease inhibitor (105 aa).

Residues 1–21 form the signal peptide; the sequence is MFRFVCVLFIALVVFCTTTSA. 5 disulfide bridges follow: Cys-26/Cys-61, Cys-35/Cys-57, Cys-39/Cys-50, Cys-43/Cys-83, and Cys-63/Cys-77. The TIL domain maps to 26–83; sequence CNRPNEEYRCGSACQTTCATLGQRCPIMNIRCNDACYCKEGYARYGDDTGMCVSISQC.

The protein belongs to the serine protease inhibitor-like (TIL domain-containing) family. As to expression, expressed by the venom gland.

It localises to the secreted. Inhibits metalloprotease (human MMP3), trypsin, chymotrypsin, plasmin and microbial serine protease (proteinase K). Exhibits antifibrinolytic activity by binding plasmin and inhibiting it. Does not inhibit elastase, thrombin or microbial serine protease (subtilisin A). The polypeptide is Venom metalloprotease inhibitor (Bombus ignitus (Bumblebee)).